The primary structure comprises 120 residues: Membrane-anchored ubiquitin-fold protein 5 (120 aa).

The Ubiquitin-like domain occupies 7-72 (IELKFRLADG…ILENNKTLSE (66 aa)). C115 is lipidated: S-palmitoyl cysteine. Cysteine methyl ester is present on C117. C117 is lipidated: S-geranylgeranyl cysteine. The propeptide at 118 to 120 (CIL) is removed in mature form.

Ubiquitous.

The protein localises to the cell membrane. May serve as docking site to facilitate the association of other proteins to the plasma membrane. The polypeptide is Membrane-anchored ubiquitin-fold protein 5 (MUB5) (Arabidopsis thaliana (Mouse-ear cress)).